The primary structure comprises 1165 residues: DNA-directed RNA polymerase subunit beta (1165 aa).

This sequence belongs to the RNA polymerase beta chain family. The RNAP catalytic core consists of 2 alpha, 1 beta, 1 beta' and 1 omega subunit. When a sigma factor is associated with the core the holoenzyme is formed, which can initiate transcription.

It carries out the reaction RNA(n) + a ribonucleoside 5'-triphosphate = RNA(n+1) + diphosphate. Its function is as follows. DNA-dependent RNA polymerase catalyzes the transcription of DNA into RNA using the four ribonucleoside triphosphates as substrates. The protein is DNA-directed RNA polymerase subunit beta of Corynebacterium glutamicum (strain ATCC 13032 / DSM 20300 / JCM 1318 / BCRC 11384 / CCUG 27702 / LMG 3730 / NBRC 12168 / NCIMB 10025 / NRRL B-2784 / 534).